Reading from the N-terminus, the 185-residue chain is Elongation factor P (185 aa).

The protein belongs to the elongation factor P family.

It localises to the cytoplasm. It functions in the pathway protein biosynthesis; polypeptide chain elongation. Its function is as follows. Involved in peptide bond synthesis. Stimulates efficient translation and peptide-bond synthesis on native or reconstituted 70S ribosomes in vitro. Probably functions indirectly by altering the affinity of the ribosome for aminoacyl-tRNA, thus increasing their reactivity as acceptors for peptidyl transferase. This Clostridioides difficile (strain 630) (Peptoclostridium difficile) protein is Elongation factor P.